A 165-amino-acid chain; its full sequence is Cyclic pyranopterin monophosphate synthase (165 aa).

Substrate is bound by residues 76–78 (LCH) and 114–115 (ME). Residue D129 is part of the active site.

The protein belongs to the MoaC family. In terms of assembly, homohexamer; trimer of dimers.

The enzyme catalyses (8S)-3',8-cyclo-7,8-dihydroguanosine 5'-triphosphate = cyclic pyranopterin phosphate + diphosphate. The protein operates within cofactor biosynthesis; molybdopterin biosynthesis. Its function is as follows. Catalyzes the conversion of (8S)-3',8-cyclo-7,8-dihydroguanosine 5'-triphosphate to cyclic pyranopterin monophosphate (cPMP). This Brucella canis (strain ATCC 23365 / NCTC 10854 / RM-666) protein is Cyclic pyranopterin monophosphate synthase.